We begin with the raw amino-acid sequence, 1198 residues long: DNA polymerase (1198 aa).

Disordered stretches follow at residues 1–87, 179–199, and 904–930; these read MALV…PRGT, LEQP…PNPP, and QLAL…PPSG. 2 stretches are compositionally biased toward low complexity: residues 30-40 and 57-68; these read QQPTRAAPAPA and APPTSGGSPASP.

It belongs to the DNA polymerase type-B family. As to quaternary structure, heterodimer with the terminal protein; this heterodimer binds to bp 9 to 18 of the genome. Forms a complex with viral pTP, DBP and hosts NFIA and POU2F1/OCT1 for initiation of replication.

The protein localises to the host nucleus. The catalysed reaction is DNA(n) + a 2'-deoxyribonucleoside 5'-triphosphate = DNA(n+1) + diphosphate. Eukaryotic-type DNA polymerase involved in viral genomic replication. DNA synthesis is protein primed, and acts in a strand displacement replication. Assembles in complex with viral pTP, DBP, host NFIA and host POU2F1/OCT1 on viral origin of replication. The polymerase covalently transfers dCMP onto pTP, thereby initiating complementary strand synthesis. This Homo sapiens (Human) protein is DNA polymerase.